The sequence spans 310 residues: Cytochrome f (310 aa).

Residues 1 to 27 (MRRILTFFLGSIIIGLSIIISPSSSFA) form the signal peptide. Tyr28, Cys48, Cys51, and His52 together coordinate heme. The chain crosses the membrane as a helical span at residues 277–297 (VIGLIAFFAGVALTQILLVLK).

This sequence belongs to the cytochrome f family. In terms of assembly, the 4 large subunits of the cytochrome b6-f complex are cytochrome b6, subunit IV (17 kDa polypeptide, PetD), cytochrome f and the Rieske protein, while the 4 small subunits are PetG, PetL, PetM and PetN. The complex functions as a dimer. Heme is required as a cofactor.

It is found in the cellular thylakoid membrane. Component of the cytochrome b6-f complex, which mediates electron transfer between photosystem II (PSII) and photosystem I (PSI), cyclic electron flow around PSI, and state transitions. This is Cytochrome f from Prochlorococcus marinus (strain SARG / CCMP1375 / SS120).